A 126-amino-acid chain; its full sequence is Histone H2B type 1-H (126 aa).

The span at 1-12 shows a compositional bias: low complexity; the sequence is MPDPAKSAPAPK. The interval 1-36 is disordered; sequence MPDPAKSAPAPKKGSKKAVTKAQKKDGKKRKRSRKE. P2 is subject to N-acetylproline. K6 is modified (N6-(2-hydroxyisobutyryl)lysine; alternate). K6 bears the N6-(beta-hydroxybutyryl)lysine; alternate mark. K6 is modified (N6-acetyllysine; alternate). K6 carries the N6-butyryllysine; alternate modification. K6 is subject to N6-crotonyllysine; alternate. K6 carries the post-translational modification N6-lactoyllysine; alternate. K6 participates in a covalent cross-link: Glycyl lysine isopeptide (Lys-Gly) (interchain with G-Cter in SUMO2); alternate. S7 is modified (ADP-ribosylserine). Position 12 is an N6-(beta-hydroxybutyryl)lysine; alternate (K12). An N6-acetyllysine; alternate mark is found at K12 and K13. K12 and K13 each carry N6-crotonyllysine; alternate. N6-lactoyllysine; alternate is present on K12. An N6-(2-hydroxyisobutyryl)lysine; alternate modification is found at K13. The residue at position 15 (S15) is a Phosphoserine; by STK4/MST1. K16, K17, K21, and K24 each carry N6-acetyllysine; alternate. N6-crotonyllysine; alternate is present on residues K16, K17, K21, and K24. N6-lactoyllysine; alternate is present on residues K16, K17, K21, and K24. N6-(beta-hydroxybutyryl)lysine; alternate occurs at positions 17 and 21. The residue at position 17 (K17) is an N6-glutaryllysine; alternate. Residues K21 and K24 each carry the N6-(2-hydroxyisobutyryl)lysine; alternate modification. Residue K21 is modified to N6-butyryllysine; alternate. K21 participates in a covalent cross-link: Glycyl lysine isopeptide (Lys-Gly) (interchain with G-Cter in SUMO2); alternate. The residue at position 25 (K25) is an N6-(2-hydroxyisobutyryl)lysine. K35 carries the post-translational modification N6-(2-hydroxyisobutyryl)lysine; alternate. K35 bears the N6-(beta-hydroxybutyryl)lysine; alternate mark. The residue at position 35 (K35) is an N6-crotonyllysine; alternate. K35 is subject to N6-glutaryllysine; alternate. K35 is modified (N6-succinyllysine; alternate). K35 participates in a covalent cross-link: Glycyl lysine isopeptide (Lys-Gly) (interchain with G-Cter in ubiquitin); alternate. E36 carries the post-translational modification PolyADP-ribosyl glutamic acid. S37 bears the Phosphoserine; by AMPK mark. N6-(2-hydroxyisobutyryl)lysine; alternate is present on residues K44, K47, and K58. K44 bears the N6-lactoyllysine; alternate mark. Residues K44 and K47 each carry the N6-glutaryllysine; alternate modification. Residue K47 is modified to N6-methyllysine; alternate. K58 bears the N6,N6-dimethyllysine; alternate mark. R80 is modified (dimethylated arginine). K86 is modified (N6-(2-hydroxyisobutyryl)lysine; alternate). N6-(beta-hydroxybutyryl)lysine; alternate is present on K86. The residue at position 86 (K86) is an N6-acetyllysine; alternate. K86 carries the post-translational modification N6-lactoyllysine; alternate. The residue at position 86 (K86) is an N6,N6,N6-trimethyllysine; alternate. An omega-N-methylarginine mark is found at R87 and R93. Residue K109 is modified to N6-(2-hydroxyisobutyryl)lysine; alternate. K109 carries the post-translational modification N6-lactoyllysine; alternate. K109 carries the post-translational modification N6-glutaryllysine; alternate. Residue K109 is modified to N6-methyllysine; alternate. Residue S113 is glycosylated (O-linked (GlcNAc) serine). T116 bears the Phosphothreonine mark. 2 positions are modified to N6-(2-hydroxyisobutyryl)lysine; alternate: K117 and K121. An N6-(beta-hydroxybutyryl)lysine; alternate mark is found at K117 and K121. N6-lactoyllysine; alternate occurs at positions 117 and 121. N6-glutaryllysine; alternate occurs at positions 117 and 121. An N6-succinyllysine; alternate mark is found at K117 and K121. N6-malonyllysine; alternate is present on K117. K117 carries the N6-methylated lysine; alternate modification. K121 is covalently cross-linked (Glycyl lysine isopeptide (Lys-Gly) (interchain with G-Cter in ubiquitin); alternate).

Belongs to the histone H2B family. The nucleosome is a histone octamer containing two molecules each of H2A, H2B, H3 and H4 assembled in one H3-H4 heterotetramer and two H2A-H2B heterodimers. The octamer wraps approximately 147 bp of DNA. Found in a complex with PPAR9; DTX3L AND STAT1; the interaction is likely to induce DTX3L-mediated ubiquitination of H2BC9/H2BJ. Post-translationally, monoubiquitination at Lys-35 (H2BK34Ub) by the MSL1/MSL2 dimer is required for histone H3 'Lys-4' (H3K4me) and 'Lys-79' (H3K79me) methylation and transcription activation at specific gene loci, such as HOXA9 and MEIS1 loci. Similarly, monoubiquitination at Lys-121 (H2BK120Ub) by the RNF20/40 complex gives a specific tag for epigenetic transcriptional activation and is also prerequisite for histone H3 'Lys-4' and 'Lys-79' methylation. It also functions cooperatively with the FACT dimer to stimulate elongation by RNA polymerase II. H2BK120Ub also acts as a regulator of mRNA splicing: deubiquitination by USP49 is required for efficient cotranscriptional splicing of a large set of exons. Monoubiquitinated by DTX3L upon encephalomyocarditis virus (EMCV)-mediated infection. Phosphorylation at Ser-37 (H2BS36ph) by AMPK in response to stress promotes transcription. Phosphorylated on Ser-15 (H2BS14ph) by STK4/MST1 during apoptosis; which facilitates apoptotic chromatin condensation. Also phosphorylated on Ser-15 in response to DNA double strand breaks (DSBs), and in correlation with somatic hypermutation and immunoglobulin class-switch recombination. In terms of processing, glcNAcylation at Ser-113 promotes monoubiquitination of Lys-121. It fluctuates in response to extracellular glucose, and associates with transcribed genes. Post-translationally, ADP-ribosylated by PARP1 or PARP2 on Ser-7 (H2BS6ADPr) in response to DNA damage. H2BS6ADPr promotes recruitment of CHD1L. Poly ADP-ribosylation on Glu-36 (H2BE35ADPr) by PARP1 regulates adipogenesis: it inhibits phosphorylation at Ser-37 (H2BS36ph), thereby blocking expression of pro-adipogenetic genes. Crotonylation (Kcr) is specifically present in male germ cells and marks testis-specific genes in post-meiotic cells, including X-linked genes that escape sex chromosome inactivation in haploid cells. Crotonylation marks active promoters and enhancers and confers resistance to transcriptional repressors. It is also associated with post-meiotically activated genes on autosomes. In terms of processing, lactylated in macrophages by EP300/P300 by using lactoyl-CoA directly derived from endogenous or exogenous lactate, leading to stimulates gene transcription.

The protein localises to the nucleus. Its subcellular location is the chromosome. In terms of biological role, core component of nucleosome. Nucleosomes wrap and compact DNA into chromatin, limiting DNA accessibility to the cellular machineries which require DNA as a template. Histones thereby play a central role in transcription regulation, DNA repair, DNA replication and chromosomal stability. DNA accessibility is regulated via a complex set of post-translational modifications of histones, also called histone code, and nucleosome remodeling. This is Histone H2B type 1-H from Homo sapiens (Human).